Here is a 162-residue protein sequence, read N- to C-terminus: Phosphopantetheine adenylyltransferase (162 aa).

T10 provides a ligand contact to substrate. Residues 10–11 and H18 each bind ATP; that span reads TF. K42, L74, and R88 together coordinate substrate. ATP contacts are provided by residues 89–91, E99, and 124–130; these read GLR and FSCISST.

It belongs to the bacterial CoaD family. In terms of assembly, homohexamer. Mg(2+) is required as a cofactor.

The protein resides in the cytoplasm. The catalysed reaction is (R)-4'-phosphopantetheine + ATP + H(+) = 3'-dephospho-CoA + diphosphate. It functions in the pathway cofactor biosynthesis; coenzyme A biosynthesis; CoA from (R)-pantothenate: step 4/5. Reversibly transfers an adenylyl group from ATP to 4'-phosphopantetheine, yielding dephospho-CoA (dPCoA) and pyrophosphate. This is Phosphopantetheine adenylyltransferase from Francisella tularensis subsp. novicida (strain U112).